The chain runs to 247 residues: 3-deoxy-manno-octulosonate cytidylyltransferase (247 aa).

The protein belongs to the KdsB family.

It localises to the cytoplasm. It carries out the reaction 3-deoxy-alpha-D-manno-oct-2-ulosonate + CTP = CMP-3-deoxy-beta-D-manno-octulosonate + diphosphate. It functions in the pathway nucleotide-sugar biosynthesis; CMP-3-deoxy-D-manno-octulosonate biosynthesis; CMP-3-deoxy-D-manno-octulosonate from 3-deoxy-D-manno-octulosonate and CTP: step 1/1. Its pathway is bacterial outer membrane biogenesis; lipopolysaccharide biosynthesis. In terms of biological role, activates KDO (a required 8-carbon sugar) for incorporation into bacterial lipopolysaccharide in Gram-negative bacteria. The sequence is that of 3-deoxy-manno-octulosonate cytidylyltransferase from Afipia carboxidovorans (strain ATCC 49405 / DSM 1227 / KCTC 32145 / OM5) (Oligotropha carboxidovorans).